Consider the following 357-residue polypeptide: Uroporphyrinogen decarboxylase (357 aa).

Substrate-binding positions include 30–34 (RQAGR), D79, Y154, S209, and H336.

Belongs to the uroporphyrinogen decarboxylase family. In terms of assembly, homodimer.

The protein resides in the cytoplasm. The catalysed reaction is uroporphyrinogen III + 4 H(+) = coproporphyrinogen III + 4 CO2. It functions in the pathway porphyrin-containing compound metabolism; protoporphyrin-IX biosynthesis; coproporphyrinogen-III from 5-aminolevulinate: step 4/4. Catalyzes the decarboxylation of four acetate groups of uroporphyrinogen-III to yield coproporphyrinogen-III. This is Uroporphyrinogen decarboxylase from Mycobacterium leprae (strain Br4923).